The chain runs to 252 residues: 3-deoxy-manno-octulosonate cytidylyltransferase (252 aa).

This sequence belongs to the KdsB family.

It localises to the cytoplasm. The enzyme catalyses 3-deoxy-alpha-D-manno-oct-2-ulosonate + CTP = CMP-3-deoxy-beta-D-manno-octulosonate + diphosphate. Its pathway is nucleotide-sugar biosynthesis; CMP-3-deoxy-D-manno-octulosonate biosynthesis; CMP-3-deoxy-D-manno-octulosonate from 3-deoxy-D-manno-octulosonate and CTP: step 1/1. It functions in the pathway bacterial outer membrane biogenesis; lipopolysaccharide biosynthesis. Functionally, activates KDO (a required 8-carbon sugar) for incorporation into bacterial lipopolysaccharide in Gram-negative bacteria. The sequence is that of 3-deoxy-manno-octulosonate cytidylyltransferase from Phocaeicola vulgatus (strain ATCC 8482 / DSM 1447 / JCM 5826 / CCUG 4940 / NBRC 14291 / NCTC 11154) (Bacteroides vulgatus).